Here is a 210-residue protein sequence, read N- to C-terminus: MHSLLAYIPIAAMMVIIPGADTMLVMKNTLRYGPKAGRYNILGLATGLSFWTVIAILGLSVVIAKSVILFTTIKYLGAAYLIYLGVKSFFAKSMFSLDDMQSQAKNMASSPKRYYKTSFMQGSLSNILNPKTVLVYVTIMPQFINLNGNINQQLIILASILTLLAVLWFLFLVYIIDYAKKWMKNSKFQKVFQKITGIILVGFGIKTGLS.

The next 4 helical transmembrane spans lie at 5-25, 50-70, 75-95, and 155-175; these read LAYI…TMLV, FWTV…VILF, YLGA…KSMF, and IILA…LVYI.

Belongs to the Rht family.

The protein resides in the cell membrane. This is an uncharacterized protein from Bacillus subtilis (strain 168).